The primary structure comprises 590 residues: L-erythrulose kinase (590 aa).

Residues 7–331 form the DhaK domain; sequence QPSSFARELT…WRAPADAPAF (325 aa). His-217 serves as the catalytic Tele-hemiaminal-histidine intermediate. A DhaL domain is found at 366-568; it reads HCVAAALNAA…LAMILDAVSA (203 aa). ADP-binding positions include 398-401, 441-442, Gly-483, Arg-540, and 553-555; these read HGIG, TS, and DAG.

The enzyme catalyses L-erythrulose + ATP = L-erythrulose 1-phosphate + ADP + H(+). Its pathway is carbohydrate metabolism. In terms of biological role, involved in catabolism of D-apiose. Catalyzes the phosphorylation of L-erythrulose to L-erythrulose 1-phosphate. Can also phosphorylate D-erythrulose and dihydroxyacetone in vitro. The chain is L-erythrulose kinase from Pectobacterium atrosepticum (strain SCRI 1043 / ATCC BAA-672) (Erwinia carotovora subsp. atroseptica).